We begin with the raw amino-acid sequence, 173 residues long: Siroheme decarboxylase alpha subunit (173 aa).

Residues histidine 115 and arginine 119 each contribute to the substrate site.

Belongs to the Ahb/Nir family. Forms a heterodimer composed of AhbA and AhbB.

The enzyme catalyses siroheme + 2 H(+) = 12,18-didecarboxysiroheme + 2 CO2. The protein operates within porphyrin-containing compound metabolism; protoheme biosynthesis. In terms of biological role, involved in siroheme-dependent heme b biosynthesis. Catalyzes the decarboxylation of siroheme into didecarboxysiroheme. Siroheme is decarboxylated to monodecarboxysiroheme, which is in turn decarboxylated to didecarboxysiroheme. The chain is Siroheme decarboxylase alpha subunit from Desulfovibrio desulfuricans (strain ATCC 27774 / DSM 6949 / MB).